Consider the following 1994-residue polypeptide: Protein-methionine sulfoxide oxidase mical3a (1994 aa).

A monooxygenase domain region spans residues 2–498; the sequence is GDGGVNAVGE…RHLLDTGETR (497 aa). Residues C101, 101–129, E120, R122, R127, N129, and D402 each bind FAD; that span reads CGLRTAIELGFLGAKVVLLEKRDAFSRNN. The 107-residue stretch at 521–627 folds into the Calponin-homology (CH) domain; sequence IVRSSKLLNW…YLSQFYEMFK (107 aa). The interval 666–708 is disordered; the sequence is ISRKRNPKDKKEKELDGLGKRRKTSQAGQSEDEELQRANRDDR. The segment covering 674–684 has biased composition (basic and acidic residues); the sequence is DKKEKELDGLG. Positions 772-834 constitute an LIM zinc-binding domain; the sequence is DVCFFCRKRV…KPHYCYRLSG (63 aa). 6 disordered regions span residues 843-900, 917-1064, 1176-1263, 1281-1476, 1493-1555, and 1598-1747; these read PAAA…LKGT, EELE…AEAR, SQPV…ELKK, LGLT…REEV, VEDT…SPEA, and KVAW…LRLR. Acidic residues-rich tracts occupy residues 917-926 and 951-961; these read EELEEVPEET and SDMEEEDEDAE. The span at 975–987 shows a compositional bias: basic and acidic residues; the sequence is EAVELHAKLKGES. Acidic residues-rich tracts occupy residues 1001-1037 and 1046-1060; these read GEMDEDEEEEEDEEDEDEEEEEESSEEPCEEDDDPEA and PGTEIDQEDIPSDAE. Polar residues predominate over residues 1200–1215; that stretch reads PTGNPLSPICTQSQPC. Basic and acidic residues-rich tracts occupy residues 1249-1263 and 1287-1297; these read RTNEHLKDSTPELKK and ERSKTAVEKSI. Low complexity-rich tracts occupy residues 1299–1314 and 1358–1368; these read KTPTPESSSPKSYTPE and SSSSGLGLNGS. Residues 1369 to 1389 are compositionally biased toward polar residues; that stretch reads VTTSQTAASDSYNNSDSTMLT. The segment covering 1437–1458 has biased composition (pro residues); that stretch reads PVSPPQPKQKPVTAPVPTPRTN. The span at 1464 to 1476 shows a compositional bias: basic and acidic residues; that stretch reads RVKEPNKPRREEV. Basic and acidic residues predominate over residues 1616-1635; it reads AQKDSAVKALESKKQADTLP. Over residues 1649–1660 the composition is skewed to low complexity; the sequence is SSVTSSESSTGG. Over residues 1661-1679 the composition is skewed to basic residues; sequence KSKKRSSLFSPRKNKKEKK. The span at 1680-1693 shows a compositional bias: basic and acidic residues; the sequence is AKNERLSSTEETPP. The segment covering 1718–1729 has biased composition (low complexity); it reads CPSTPSSSTTGD. Positions 1730–1746 are enriched in basic and acidic residues; the sequence is SGKKKDSPLDRSSDLRL. 2 coiled-coil regions span residues 1796-1855 and 1894-1960; these read EEEL…KALR and QEKN…EQRD. Residues 1816–1982 enclose the bMERB domain; it reads KQEELKRLHR…EKEEDKDLEA (167 aa).

This sequence belongs to the Mical family. Requires FAD as cofactor.

Its subcellular location is the cytoplasm. It localises to the cytoskeleton. The protein localises to the nucleus. It catalyses the reaction L-methionyl-[F-actin] + NADPH + O2 + H(+) = L-methionyl-(R)-S-oxide-[F-actin] + NADP(+) + H2O. Functionally, monooxygenase that promotes depolymerization of F-actin by mediating oxidation of specific methionine residues on actin. Acts by modifying actin subunits through the addition of oxygen to form methionine-sulfoxide, leading to promote actin filament severing and prevent repolymerization. Involved in exocytic vesicles tethering and fusion: the monooxygenase activity is required for this process. The sequence is that of Protein-methionine sulfoxide oxidase mical3a (mical3a) from Danio rerio (Zebrafish).